Here is a 180-residue protein sequence, read N- to C-terminus: Shikimate kinase (180 aa).

19 to 24 serves as a coordination point for ATP; it reads GAGKTT. Residue T23 participates in Mg(2+) binding. 3 residues coordinate substrate: D41, R65, and G87. R125 serves as a coordination point for ATP. Residue R144 participates in substrate binding.

The protein belongs to the shikimate kinase family. In terms of assembly, monomer. The cofactor is Mg(2+).

It localises to the cytoplasm. It carries out the reaction shikimate + ATP = 3-phosphoshikimate + ADP + H(+). Its pathway is metabolic intermediate biosynthesis; chorismate biosynthesis; chorismate from D-erythrose 4-phosphate and phosphoenolpyruvate: step 5/7. In terms of biological role, catalyzes the specific phosphorylation of the 3-hydroxyl group of shikimic acid using ATP as a cosubstrate. This chain is Shikimate kinase, found in Acinetobacter baumannii (strain SDF).